Reading from the N-terminus, the 514-residue chain is 2,3-bisphosphoglycerate-independent phosphoglycerate mutase (514 aa).

Mn(2+) contacts are provided by Asp14 and Ser64. The active-site Phosphoserine intermediate is Ser64. Residues His125, 155–156 (RD), Arg187, Arg193, 263–266 (RADR), and Lys336 each bind substrate. Residues Asp403, His407, Asp444, His445, and His463 each coordinate Mn(2+).

The protein belongs to the BPG-independent phosphoglycerate mutase family. In terms of assembly, monomer. Mn(2+) serves as cofactor.

It catalyses the reaction (2R)-2-phosphoglycerate = (2R)-3-phosphoglycerate. It participates in carbohydrate degradation; glycolysis; pyruvate from D-glyceraldehyde 3-phosphate: step 3/5. In terms of biological role, catalyzes the interconversion of 2-phosphoglycerate and 3-phosphoglycerate. In Salmonella choleraesuis (strain SC-B67), this protein is 2,3-bisphosphoglycerate-independent phosphoglycerate mutase.